Consider the following 237-residue polypeptide: Ras-related protein Rab-23 (237 aa).

7 residues coordinate GTP: valine 20, glycine 21, lysine 22, serine 23, serine 24, tyrosine 38, and threonine 41. Serine 23 serves as a coordination point for Mg(2+). The Switch 1 motif lies at 28-46 (RYCKGIFTKDYKKTIGVDF). Positions 41 and 64 each coordinate Mg(2+). Residues 65–84 (TAGQEEFDAITKAYYRGAQA) carry the Switch 2 motif. Residues glycine 67, asparagine 121, lysine 122, aspartate 124, serine 151, valine 152, and lysine 153 each contribute to the GTP site. Serine 186 and serine 187 each carry phosphoserine. Residues 188–208 (SNKIGVFNTSGGSHSGQNSGT) are compositionally biased toward polar residues. Positions 188–237 (SNKIGVFNTSGGSHSGQNSGTLNGGDVINLRPNKQRTKKNRNPFSSCSIP) are disordered. Cysteine 234 carries the cysteine methyl ester modification. A lipid anchor (S-geranylgeranyl cysteine) is attached at cysteine 234. The propeptide at 235–237 (SIP) is removed in mature form.

Belongs to the small GTPase superfamily. Rab family. As to quaternary structure, interacts with SUFU. It depends on Mg(2+) as a cofactor.

The protein localises to the cell membrane. It localises to the cytoplasm. The protein resides in the cytoplasmic vesicle. It is found in the autophagosome. Its subcellular location is the endosome membrane. The protein localises to the phagosome. It localises to the phagosome membrane. It carries out the reaction GTP + H2O = GDP + phosphate + H(+). Regulated by guanine nucleotide exchange factors (GEFs) which promote the exchange of bound GDP for free GTP. Regulated by GTPase activating proteins (GAPs) which increase the GTP hydrolysis activity. Inhibited by GDP dissociation inhibitors (GDIs). Functionally, the small GTPases Rab are key regulators of intracellular membrane trafficking, from the formation of transport vesicles to their fusion with membranes. Rabs cycle between an inactive GDP-bound form and an active GTP-bound form that is able to recruit to membranes different set of downstream effectors directly responsible for vesicle formation, movement, tethering and fusion. Together with SUFU, prevents nuclear import of GLI1, and thereby inhibits GLI1 transcription factor activity. Regulates GLI1 in differentiating chondrocytes. Likewise, regulates GLI3 proteolytic processing and modulates GLI2 and GLI3 transcription factor activity. Plays a role in autophagic vacuole assembly, and mediates defense against pathogens, such as S.aureus, by promoting their capture by autophagosomes that then merge with lysosomes. The protein is Ras-related protein Rab-23 of Homo sapiens (Human).